The sequence spans 476 residues: Glutamate--tRNA ligase (476 aa).

The 'HIGH' region signature appears at 9–19 (PSPTGLFHIGT). A 'KMSKS' region motif is present at residues 248–252 (KLSKR). An ATP-binding site is contributed by K251.

This sequence belongs to the class-I aminoacyl-tRNA synthetase family. Glutamate--tRNA ligase type 1 subfamily. Monomer.

It localises to the cytoplasm. It carries out the reaction tRNA(Glu) + L-glutamate + ATP = L-glutamyl-tRNA(Glu) + AMP + diphosphate. Its function is as follows. Catalyzes the attachment of glutamate to tRNA(Glu) in a two-step reaction: glutamate is first activated by ATP to form Glu-AMP and then transferred to the acceptor end of tRNA(Glu). This is Glutamate--tRNA ligase from Prochlorococcus marinus (strain MIT 9301).